Consider the following 236-residue polypeptide: UPF0257 lipoprotein YnfC (236 aa).

Residues 1–16 (MKKPLLLTLLCMILAG) form the signal peptide. Cysteine 17 carries N-palmitoyl cysteine lipidation. Cysteine 17 is lipidated: S-diacylglycerol cysteine.

It belongs to the UPF0257 family.

It is found in the cell membrane. In Salmonella heidelberg (strain SL476), this protein is UPF0257 lipoprotein YnfC.